A 567-amino-acid polypeptide reads, in one-letter code: Galectin-3-binding protein A (567 aa).

An N-terminal signal peptide occupies residues 1–16 (MIMYIIWALLFIPVSA). The 100-residue stretch at 34 to 133 (VRLVGGLPSS…HQEDAGVVCD (100 aa)) folds into the SRCR domain. Intrachain disulfides connect C58/C122, C71/C132, and C102/C112. N137, N197, N200, and N204 each carry an N-linked (GlcNAc...) asparagine glycan. Residues 272-374 (PVSMYEYGLR…IPVDKLYDIQ (103 aa)) enclose the BACK domain. N412, N432, and N543 each carry an N-linked (GlcNAc...) asparagine glycan.

The protein resides in the secreted. The protein localises to the extracellular space. It is found in the extracellular matrix. In terms of biological role, promotes integrin-mediated cell adhesion. The chain is Galectin-3-binding protein A (lgals3bpa) from Danio rerio (Zebrafish).